The sequence spans 497 residues: POU domain, class 3, transcription factor 3 (497 aa).

A compositionally biased stretch (gly residues) spans 31 to 51 (GGGGGGGGGGGGAGGGGGGMQ). Disordered stretches follow at residues 31 to 62 (GGGGGGGGGGGGAGGGGGGMQPGSAAVTSGAY), 121 to 189 (WSGS…WGAA), 230 to 316 (NGML…TPTS), and 458 to 497 (EKRMTPPGIQQQTPDDVYSQVGTVSADTPPPHHGLQTSVQ). Composition is skewed to pro residues over residues 133–145 (QQPPRPPPPPPQG) and 170–180 (HLGPPPPPPHQ). Over residues 240-250 (GGGGGGAGGGA) the composition is skewed to gly residues. The segment covering 269–286 (HHHHHHHHAHPHPPHPHH) has biased composition (basic residues). The POU-specific domain occupies 311–385 (EDTPTSDDLE…LLNKWLEEAD (75 aa)). A DNA-binding region (homeobox) is located at residues 403–462 (KRKKRTSIEVSVKGALESHFLKCPKPSAQEITNLADSLQLEKEVVRVWFCNRRQKEKRMT). A compositionally biased stretch (polar residues) spans 465–483 (GIQQQTPDDVYSQVGTVSA).

This sequence belongs to the POU transcription factor family. Class-3 subfamily. As to quaternary structure, homodimer. In terms of tissue distribution, brain.

Its subcellular location is the nucleus. In terms of biological role, transcription factor that acts synergistically with SOX11 and SOX4. Plays a role in neuronal development. Is implicated in an enhancer activity at the embryonic met-mesencephalic junction; the enhancer element contains the octamer motif (5'-ATTTGCAT-3'). The sequence is that of POU domain, class 3, transcription factor 3 (Pou3f3) from Rattus norvegicus (Rat).